A 114-amino-acid chain; its full sequence is Small ribosomal subunit protein bS6 (114 aa).

It belongs to the bacterial ribosomal protein bS6 family.

Functionally, binds together with bS18 to 16S ribosomal RNA. The protein is Small ribosomal subunit protein bS6 of Hydrogenovibrio crunogenus (strain DSM 25203 / XCL-2) (Thiomicrospira crunogena).